Reading from the N-terminus, the 316-residue chain is Ribosomal RNA small subunit methyltransferase H (316 aa).

Residues 35–37 (AGH), D55, F84, D105, and Q112 contribute to the S-adenosyl-L-methionine site.

It belongs to the methyltransferase superfamily. RsmH family.

It is found in the cytoplasm. It carries out the reaction cytidine(1402) in 16S rRNA + S-adenosyl-L-methionine = N(4)-methylcytidine(1402) in 16S rRNA + S-adenosyl-L-homocysteine + H(+). Functionally, specifically methylates the N4 position of cytidine in position 1402 (C1402) of 16S rRNA. This chain is Ribosomal RNA small subunit methyltransferase H, found in Streptococcus pneumoniae (strain ATCC 700669 / Spain 23F-1).